The following is a 380-amino-acid chain: Hydrogenase maturation factor HypD1 (380 aa).

Residues Cys36, Cys64, and Cys67 each coordinate Fe cation.

This sequence belongs to the HypD family. The cofactor is [4Fe-4S] cluster.

Its pathway is protein modification; [NiFe] hydrogenase maturation. Its function is as follows. Involved in the maturation of [NiFe] hydrogenases. Involved in the biosynthesis of the Fe(CN)(2)CO cofactor. The chain is Hydrogenase maturation factor HypD1 (hypD1) from Bradyrhizobium diazoefficiens (strain JCM 10833 / BCRC 13528 / IAM 13628 / NBRC 14792 / USDA 110).